Consider the following 589-residue polypeptide: Guanylate-binding protein 2 (589 aa).

The GTPase domain (Globular) stretch occupies residues 1-309 (MASEIHMSEP…GAISNGSLPC (309 aa)). The GB1/RHD3-type G domain maps to 35–276 (TQPVVVVAIV…FTSYILSYSS (242 aa)). GTP is bound by residues 45–52 (GLYRTGKS), 181–182 (RD), and Leu245. Cys586 carries the cysteine methyl ester modification. Cys586 carries the S-geranylgeranyl cysteine lipid modification. The propeptide at 587–589 (TIL) is removed in mature form.

It belongs to the TRAFAC class dynamin-like GTPase superfamily. GB1/RHD3 GTPase family. GB1 subfamily. As to quaternary structure, homodimer; homodimerization occurs upon GTP-binding and is required for the association with membranous structures. Heterodimer with other family members, including GBP1, GBP3, GBP4 and GBP5. In terms of processing, isoprenylation is required for proper subcellular location.

It is found in the cytoplasmic vesicle membrane. The protein localises to the golgi apparatus membrane. The protein resides in the cytoplasm. Its subcellular location is the perinuclear region. It carries out the reaction GTP + H2O = GDP + phosphate + H(+). Interferon (IFN)-inducible GTPase that plays important roles in innate immunity against a diverse range of bacterial, viral and protozoan pathogens. Hydrolyzes GTP to GMP in 2 consecutive cleavage reactions, but the major reaction product is GDP. Following infection, recruited to the pathogen-containing vacuoles or vacuole-escaped bacteria and acts as a positive regulator of inflammasome assembly by promoting the release of inflammasome ligands from bacteria. Acts by promoting lysis of pathogen-containing vacuoles, releasing pathogens into the cytosol. Following pathogen release in the cytosol, promotes recruitment of proteins that mediate bacterial cytolysis, such as Gm12250/Irgb10: this liberates ligands that are detected by inflammasomes, such as lipopolysaccharide (LPS) that activates the non-canonical CASP4/CASP11 inflammasome or double-stranded DNA (dsDNA) that activates the AIM2 inflammasome. Confers protection to the protozoan pathogen Toxoplasma gondii. Independently of its GTPase activity, acts as an inhibitor of various viruses infectivity by inhibiting FURIN-mediated maturation of viral envelope proteins. In Mus musculus (Mouse), this protein is Guanylate-binding protein 2.